The sequence spans 218 residues: YlmG homolog protein 1-2, chloroplastic (218 aa).

A chloroplast-targeting transit peptide spans 1 to 83; it reads MASFTTNSLA…TRSITTLVLL (83 aa). A run of 2 helical transmembrane segments spans residues 133–153 and 187–207; these read LTVV…VLMV and IIPP…AVLG.

The protein belongs to the YggT family.

It is found in the plastid. The protein resides in the chloroplast thylakoid membrane. Functionally, not required for the biogenesis and accumulation of native cytochrome b6 in the thylakoid membrane. Not functionally involved in the pathway for covalent binding of the c-type heme to cytochrome b6. The chain is YlmG homolog protein 1-2, chloroplastic from Arabidopsis thaliana (Mouse-ear cress).